The following is a 98-amino-acid chain: NADH-ubiquinone oxidoreductase chain 4L (98 aa).

The next 3 membrane-spanning stretches (helical) occupy residues 1 to 21 (MSLV…GLLM), 29 to 49 (SLLC…IMIL), and 61 to 81 (IILL…LVMV).

It belongs to the complex I subunit 4L family. In terms of assembly, core subunit of respiratory chain NADH dehydrogenase (Complex I) which is composed of 45 different subunits.

Its subcellular location is the mitochondrion inner membrane. The enzyme catalyses a ubiquinone + NADH + 5 H(+)(in) = a ubiquinol + NAD(+) + 4 H(+)(out). In terms of biological role, core subunit of the mitochondrial membrane respiratory chain NADH dehydrogenase (Complex I) which catalyzes electron transfer from NADH through the respiratory chain, using ubiquinone as an electron acceptor. Part of the enzyme membrane arm which is embedded in the lipid bilayer and involved in proton translocation. The protein is NADH-ubiquinone oxidoreductase chain 4L (MT-ND4L) of Urotrichus talpoides (Japanese shrew mole).